A 252-amino-acid polypeptide reads, in one-letter code: Chitooligosaccharide deacetylase (252 aa).

Mg(2+) is bound by residues H61 and H125.

It belongs to the YdjC deacetylase family. ChbG subfamily. As to quaternary structure, homodimer. Mg(2+) is required as a cofactor.

It localises to the cytoplasm. It catalyses the reaction N,N'-diacetylchitobiose + H2O = N-acetyl-beta-D-glucosaminyl-(1-&gt;4)-D-glucosamine + acetate. It carries out the reaction diacetylchitobiose-6'-phosphate + H2O = N'-monoacetylchitobiose-6'-phosphate + acetate. It participates in glycan degradation; chitin degradation. Functionally, involved in the degradation of chitin. ChbG is essential for growth on the acetylated chitooligosaccharides chitobiose and chitotriose but is dispensable for growth on cellobiose and chitosan dimer, the deacetylated form of chitobiose. Deacetylation of chitobiose-6-P and chitotriose-6-P is necessary for both the activation of the chb promoter by the regulatory protein ChbR and the hydrolysis of phosphorylated beta-glucosides by the phospho-beta-glucosidase ChbF. Catalyzes the removal of only one acetyl group from chitobiose-6-P to yield monoacetylchitobiose-6-P, the inducer of ChbR and the substrate of ChbF. In Salmonella typhimurium (strain LT2 / SGSC1412 / ATCC 700720), this protein is Chitooligosaccharide deacetylase.